The primary structure comprises 98 residues: Large ribosomal subunit protein uL23 (98 aa).

Belongs to the universal ribosomal protein uL23 family. As to quaternary structure, part of the 50S ribosomal subunit. Contacts protein L29, and trigger factor when it is bound to the ribosome.

In terms of biological role, one of the early assembly proteins it binds 23S rRNA. One of the proteins that surrounds the polypeptide exit tunnel on the outside of the ribosome. Forms the main docking site for trigger factor binding to the ribosome. This Nitrobacter hamburgensis (strain DSM 10229 / NCIMB 13809 / X14) protein is Large ribosomal subunit protein uL23.